Reading from the N-terminus, the 310-residue chain is Vomeronasal type-1 receptor 44 (310 aa).

At 1–20 (MNKANLLHIDTNIKITLLAE) the chain is on the extracellular side. The chain crosses the membrane as a helical span at residues 21-41 (VSVGISANSILFIAYLCMLLG). The Cytoplasmic segment spans residues 42–50 (ENRHKPIDL). A helical transmembrane segment spans residues 51–71 (YIAFLSLTQLMLLITMGLIAV). Topologically, residues 72–93 (DMFMPWGRWDSTTCQSLIYLHR) are extracellular. A disulfide bridge links cysteine 85 with cysteine 172. A helical transmembrane segment spans residues 94-114 (FLRGLTLCATCLLNVLWTITL). Topologically, residues 115–131 (SSRNSCLAKFKHKYPHH) are cytoplasmic. A helical membrane pass occupies residues 132-152 (ISGAFLFLCVLYMSFSSHFLV). At 153–190 (SMTVTPNLTSENFMYVTQSCSLLPMSYSRTSMFSTPVA) the chain is on the extracellular side. An N-linked (GlcNAc...) asparagine glycan is attached at asparagine 159. Residues 191-211 (IRETFLISLMALSSGYMVALL) traverse the membrane as a helical segment. The Cytoplasmic portion of the chain corresponds to 212 to 238 (WRHKKQAQHLRSTSLSSKASPEQRATR). A helical membrane pass occupies residues 239–259 (TILLLMSFFVVFYILDTVIFH). Residues 260 to 268 (SRMKFKDGS) lie on the Extracellular side of the membrane. Residues 269 to 289 (ILYCFQIIVSHSYVTVSPFVF) traverse the membrane as a helical segment. Residues 290 to 310 (ICTEKHIIKFLRSMCGRIANI) lie on the Cytoplasmic side of the membrane.

Belongs to the G-protein coupled receptor 1 family.

Its subcellular location is the cell membrane. Its function is as follows. Putative pheromone receptor implicated in the regulation of social and reproductive behavior. In Mus musculus (Mouse), this protein is Vomeronasal type-1 receptor 44 (Vmn1r44).